The following is a 269-amino-acid chain: Zinc transporter ZupT (269 aa).

8 helical membrane-spanning segments follow: residues 12–32, 41–61, 75–95, 126–146, 152–172, 187–207, 211–231, and 249–269; these read AFSITLAAGLFTVLGSGLVMF, LSFGLAFAGGAMVYVSLTEIF, DHAFAAATMAFLAGMGGIALI, MMAAFAITAHNFPEGLATFFA, AVGMPLALAIAIHNIPEGISI, VWACLLSGLAEPLGAALGYLV, FLSPAVFGSVFGVIAGVMVFL, and TVYGLTTGMAVIAVSLVLFHF. Residues N136 and E139 each contribute to the Fe(2+) site. 2 residues coordinate Zn(2+): E139 and H164. Fe(2+) is bound by residues N165, E168, and E197. Position 168 (E168) interacts with Zn(2+).

The protein belongs to the ZIP transporter (TC 2.A.5) family. ZupT subfamily.

It localises to the cell inner membrane. It catalyses the reaction Zn(2+)(in) = Zn(2+)(out). Its function is as follows. Mediates zinc uptake. May also transport other divalent cations. This is Zinc transporter ZupT from Neisseria meningitidis serogroup B (strain ATCC BAA-335 / MC58).